A 66-amino-acid chain; its full sequence is Sodium channel neurotoxin MeuNaTxalpha-7 (66 aa).

An LCN-type CS-alpha/beta domain is found at 2 to 64 (RDGYIADDKN…VPIKVSGKCN (63 aa)). Cystine bridges form between cysteine 12-cysteine 63, cysteine 16-cysteine 36, cysteine 22-cysteine 46, and cysteine 26-cysteine 48. The residue at position 64 (asparagine 64) is an Asparagine amide.

The protein belongs to the long (4 C-C) scorpion toxin superfamily. Sodium channel inhibitor family. Alpha subfamily. In terms of tissue distribution, expressed by the venom gland.

It localises to the secreted. Its function is as follows. Alpha toxins bind voltage-independently at site-3 of sodium channels (Nav) and inhibit the inactivation of the activated channels, thereby blocking neuronal transmission. This is Sodium channel neurotoxin MeuNaTxalpha-7 from Mesobuthus eupeus (Lesser Asian scorpion).